Reading from the N-terminus, the 1086-residue chain is Phosphinothricin tripeptide synthetase PhsC (1086 aa).

Residues Arg-22–Gly-43 are disordered. Positions Val-45 to Asp-484 are condensation. The tract at residues Leu-510 to Arg-901 is adenylation. A disordered region spans residues Gly-983–Leu-1007. In terms of domain architecture, Carrier spans Pro-1006 to Arg-1081. Ser-1041 carries the O-(pantetheine 4'-phosphoryl)serine modification.

This sequence belongs to the NRP synthetase family. It depends on pantetheine 4'-phosphate as a cofactor.

It carries out the reaction holo-[peptidyl-carrier protein] + L-alanine + ATP = L-alanyl-[peptidyl-carrier protein] + AMP + diphosphate. The protein operates within secondary metabolite biosynthesis; bialaphos biosynthesis. Involved in the biosynthesis of phosphinothricin tripeptide (PTT), also known as bialaphos (BA), a natural-product antibiotic and potent herbicide. Adenylates L-alanine and loads it onto a peptidyl carrier domain via a thioester linkage to the phosphopanthetheine moiety. Shows weaker activity with aminobutyric acid and L-serine. The chain is Phosphinothricin tripeptide synthetase PhsC from Streptomyces viridochromogenes (strain DSM 40736 / JCM 4977 / BCRC 1201 / Tue 494).